Consider the following 162-residue polypeptide: Flagellar assembly factor FliW (162 aa).

It belongs to the FliW family. In terms of assembly, interacts with translational regulator CsrA and flagellin(s).

The protein resides in the cytoplasm. Its function is as follows. Acts as an anti-CsrA protein, binds CsrA and prevents it from repressing translation of its target genes, one of which is flagellin. Binds to flagellin and participates in the assembly of the flagellum. The protein is Flagellar assembly factor FliW of Magnetococcus marinus (strain ATCC BAA-1437 / JCM 17883 / MC-1).